The following is a 143-amino-acid chain: uncharacterized protein (143 aa).

Residues 1 to 16 form the signal peptide; the sequence is MSRNRLFLVAGSLAVA. The chain crosses the membrane as a helical span at residues 114–134; sequence GAYVFLGPGFTPGSPSGGSGG.

It is found in the membrane. This is an uncharacterized protein from Mycobacterium tuberculosis (strain CDC 1551 / Oshkosh).